The chain runs to 363 residues: UDP-N-acetylglucosamine--N-acetylmuramyl-(pentapeptide) pyrophosphoryl-undecaprenol N-acetylglucosamine transferase (363 aa).

UDP-N-acetyl-alpha-D-glucosamine-binding positions include 12-14, N122, R164, S191, I245, and Q290; that span reads TGG.

It belongs to the glycosyltransferase 28 family. MurG subfamily.

It localises to the cell membrane. It carries out the reaction di-trans,octa-cis-undecaprenyl diphospho-N-acetyl-alpha-D-muramoyl-L-alanyl-D-glutamyl-meso-2,6-diaminopimeloyl-D-alanyl-D-alanine + UDP-N-acetyl-alpha-D-glucosamine = di-trans,octa-cis-undecaprenyl diphospho-[N-acetyl-alpha-D-glucosaminyl-(1-&gt;4)]-N-acetyl-alpha-D-muramoyl-L-alanyl-D-glutamyl-meso-2,6-diaminopimeloyl-D-alanyl-D-alanine + UDP + H(+). It participates in cell wall biogenesis; peptidoglycan biosynthesis. Its function is as follows. Cell wall formation. Catalyzes the transfer of a GlcNAc subunit on undecaprenyl-pyrophosphoryl-MurNAc-pentapeptide (lipid intermediate I) to form undecaprenyl-pyrophosphoryl-MurNAc-(pentapeptide)GlcNAc (lipid intermediate II). The chain is UDP-N-acetylglucosamine--N-acetylmuramyl-(pentapeptide) pyrophosphoryl-undecaprenol N-acetylglucosamine transferase from Lawsonia intracellularis (strain PHE/MN1-00).